We begin with the raw amino-acid sequence, 167 residues long: MSLALRGELVVDKTKRKKRRELSEEQKQEIKDAFELFDTDKDQAIDYHELKVAMRALGFDVKKADVLKILKDYDREATGKITFEDFNEVVTDWILERDPHEEILKAFKLFDDDDSGKISLRNLRRVARELGENMSDEELRAMIEEFDKDGDGEINQEEFIAIMTGDI.

4 consecutive EF-hand domains span residues 25 to 60 (EQKQ…LGFD), 61 to 96 (VKKA…WILE), 98 to 133 (DPHE…LGEN), and 134 to 167 (MSDE…TGDI). Asp38, Asp40, Asp42, and Glu49 together coordinate Ca(2+). Ser135 carries the phosphoserine modification. The Ca(2+) site is built by Asp147, Asp149, Asp151, Glu153, and Glu158.

It belongs to the centrin family. As to quaternary structure, monomer. Component of the TREX-2 complex (transcription and export complex 2), composed of at least ENY2, GANP, PCID2, SEM1, and either centrin CETN2 or CETN3. Interacts with USP49.

It is found in the cytoplasm. Its subcellular location is the cytoskeleton. It localises to the microtubule organizing center. The protein resides in the centrosome. The protein localises to the nucleus. It is found in the nucleolus. Its subcellular location is the nucleus envelope. It localises to the nuclear pore complex. The protein resides in the centriole. Functionally, plays a fundamental role in microtubule-organizing center structure and function. As a component of the TREX-2 complex, involved in the export of mRNAs to the cytoplasm through the nuclear pores. The polypeptide is Centrin-3 (Cetn3) (Mus musculus (Mouse)).